Here is a 190-residue protein sequence, read N- to C-terminus: Acireductone dioxygenase (190 aa).

Fe(2+)-binding residues include H101, H103, E107, and H145. Ni(2+) is bound by residues H101, H103, E107, and H145.

This sequence belongs to the acireductone dioxygenase (ARD) family. As to quaternary structure, monomer. It depends on Fe(2+) as a cofactor. Ni(2+) serves as cofactor.

It catalyses the reaction 1,2-dihydroxy-5-(methylsulfanyl)pent-1-en-3-one + O2 = 3-(methylsulfanyl)propanoate + CO + formate + 2 H(+). The enzyme catalyses 1,2-dihydroxy-5-(methylsulfanyl)pent-1-en-3-one + O2 = 4-methylsulfanyl-2-oxobutanoate + formate + 2 H(+). The protein operates within amino-acid biosynthesis; L-methionine biosynthesis via salvage pathway; L-methionine from S-methyl-5-thio-alpha-D-ribose 1-phosphate: step 5/6. In terms of biological role, catalyzes 2 different reactions between oxygen and the acireductone 1,2-dihydroxy-3-keto-5-methylthiopentene (DHK-MTPene) depending upon the metal bound in the active site. Fe-containing acireductone dioxygenase (Fe-ARD) produces formate and 2-keto-4-methylthiobutyrate (KMTB), the alpha-ketoacid precursor of methionine in the methionine recycle pathway. Ni-containing acireductone dioxygenase (Ni-ARD) produces methylthiopropionate, carbon monoxide and formate, and does not lie on the methionine recycle pathway. This Saccharopolyspora erythraea (strain ATCC 11635 / DSM 40517 / JCM 4748 / NBRC 13426 / NCIMB 8594 / NRRL 2338) protein is Acireductone dioxygenase.